Reading from the N-terminus, the 118-residue chain is UPF0102 protein Francci3_3586 (118 aa).

The protein belongs to the UPF0102 family.

This is UPF0102 protein Francci3_3586 from Frankia casuarinae (strain DSM 45818 / CECT 9043 / HFP020203 / CcI3).